Reading from the N-terminus, the 155-residue chain is MKIKIITLGEKPPKWVSDGYDEYKKRLSKSIPLELIELPIAKRTKTGNPKLWMEQEAKTILGKLNDSDHLVILDVNSKIISTEELADKMQNWKFNNPNVVILIGGPDGIDQSIKDIAKEKISISKMTFPHPLVRIIIAEQLYRAYTILEGHPYHK.

Residues leucine 73, glycine 104, and 123 to 128 (ISKMTF) contribute to the S-adenosyl-L-methionine site.

The protein belongs to the RNA methyltransferase RlmH family. Homodimer.

It is found in the cytoplasm. The enzyme catalyses pseudouridine(1915) in 23S rRNA + S-adenosyl-L-methionine = N(3)-methylpseudouridine(1915) in 23S rRNA + S-adenosyl-L-homocysteine + H(+). Specifically methylates the pseudouridine at position 1915 (m3Psi1915) in 23S rRNA. This is Ribosomal RNA large subunit methyltransferase H from Francisella tularensis subsp. novicida (strain U112).